We begin with the raw amino-acid sequence, 1111 residues long: Kinesin-like protein KIP1 (1111 aa).

The segment covering 1–11 has biased composition (polar residues); sequence MARSSLPNRRT. The disordered stretch occupies residues 1–34; it reads MARSSLPNRRTAQFEANKRRTIAHAPSPSLSNGM. The region spanning 52–410 is the Kinesin motor domain; that stretch reads NIHVYVRCRS…LEYATRAKSI (359 aa). ATP is bound at residue 141–148; it reads GQTGTGKT. 4 coiled-coil regions span residues 424-510, 648-670, 710-780, and 808-828; these read TCLK…IIQN, KDLNEIYQSHQQFLKNLQNDIKS, KLIK…DQDI, and HNAENTLKTVSQNNESFTNDL. Residues 1007-1016 are compositionally biased toward basic and acidic residues; it reads AENKSKDDTS. The disordered stretch occupies residues 1007–1111; it reads AENKSKDDTS…DILQNKKLHQ (105 aa). Polar residues-rich tracts occupy residues 1017–1038 and 1057–1082; these read NSRTCIPNLSTNENFPLSQFSP and SINSAKSNRSKTLPNTEGTGRESQNN.

This sequence belongs to the TRAFAC class myosin-kinesin ATPase superfamily. Kinesin family. BimC subfamily. As to quaternary structure, might be dimeric.

The protein resides in the cytoplasm. Its subcellular location is the cytoskeleton. The protein localises to the spindle. Its function is as follows. Required for assembly of the mitotic spindle. Interacts with spindle microtubules to produce an outwardly directed force acting upon the poles. Following spindle assembly, CIN8 and KIP1 apparently act to oppose a force that draws separated poles back together. This force seems to be mediate by KAR3. This Saccharomyces cerevisiae (strain ATCC 204508 / S288c) (Baker's yeast) protein is Kinesin-like protein KIP1 (KIP1).